A 343-amino-acid polypeptide reads, in one-letter code: Phenylalanine--tRNA ligase alpha subunit (343 aa).

Residue Glu-264 participates in Mg(2+) binding.

This sequence belongs to the class-II aminoacyl-tRNA synthetase family. Phe-tRNA synthetase alpha subunit type 1 subfamily. In terms of assembly, tetramer of two alpha and two beta subunits. Mg(2+) serves as cofactor.

It is found in the cytoplasm. It catalyses the reaction tRNA(Phe) + L-phenylalanine + ATP = L-phenylalanyl-tRNA(Phe) + AMP + diphosphate + H(+). The polypeptide is Phenylalanine--tRNA ligase alpha subunit (Azoarcus sp. (strain BH72)).